The following is a 420-amino-acid chain: Gamma-glutamyl phosphate reductase (420 aa).

The protein belongs to the gamma-glutamyl phosphate reductase family.

The protein resides in the cytoplasm. It carries out the reaction L-glutamate 5-semialdehyde + phosphate + NADP(+) = L-glutamyl 5-phosphate + NADPH + H(+). The protein operates within amino-acid biosynthesis; L-proline biosynthesis; L-glutamate 5-semialdehyde from L-glutamate: step 2/2. Its function is as follows. Catalyzes the NADPH-dependent reduction of L-glutamate 5-phosphate into L-glutamate 5-semialdehyde and phosphate. The product spontaneously undergoes cyclization to form 1-pyrroline-5-carboxylate. In Laribacter hongkongensis (strain HLHK9), this protein is Gamma-glutamyl phosphate reductase.